The chain runs to 177 residues: R-phycoerythrin beta chain (177 aa).

(2R,3E)-phycoerythrobilin-binding residues include Asn-35 and Asp-39. 3 residues coordinate phycourobilin: Cys-50, Asp-54, and Cys-61. Residues Asn-72, 77 to 78 (RR), Cys-82, and 84 to 85 (RD) each bind (2R,3E)-phycoerythrobilin. Asn-72 bears the N4-methylasparagine mark. Residue 147–148 (SG) participates in phycourobilin binding. Cys-158 contacts (2R,3E)-phycoerythrobilin.

The protein belongs to the phycobiliprotein family. In terms of assembly, heterododecamer of 6 alpha and 6 beta chains. The basic functional unit of phycobiliproteins is a ring-shaped hexamer formed from two back-to-back trimers contacting via the alpha chain subunits. The trimers are composed of alpha/beta subunit heterodimers arranged around a three-fold axis of symmetry. The phycoerythrins also contain a gamma subunit which is located in the center of the hexamer. In terms of processing, contains two covalently linked phycoerythrobilin chromophores and one covalently linked phycourobilin chromophore.

Its subcellular location is the plastid. The protein resides in the chloroplast thylakoid membrane. Light-harvesting photosynthetic tetrapyrrole chromophore-protein from the phycobiliprotein complex. The chain is R-phycoerythrin beta chain (cpeB) from Griffithsia monilis (Red alga).